The following is a 662-amino-acid chain: MMEPEEYRERGREMVDYICQYLSTVRERRVTPDVQPGYLRAQLPESAPEDPDSWDSIFGDIERIIMPGVVHWQSPHMHAYYPALTSWPSLLGDMLADAINCLGFTWASSPACTELEMNVMDWLAKMLGLPEHFLHHHPSSQGGGVLQSTVSESTLIALLAARKNKILEMKTSEPDADESCLNARLVAYASDQAHSSVEKAGLISLVKMKFLPVDDNFSLRGEALQKAIEEDKQRGLVPVFVCATLGTTGVCAFDCLSELGPICAREGLWLHIDAAYAGTAFLCPEFRGFLKGIEYADSFTFNPSKWMMVHFDCTGFWVKDKYKLQQTFSVNPIYLRHANSGVATDFMHWQIPLSRRFRSVKLWFVIRSFGVKNLQAHVRHGTEMAKYFESLVRNDPSFEIPAKRHLGLVVFRLKGPNCLTENVLKEIAKAGRLFLIPATIQDKLIIRFTVTSQFTTRDDILRDWNLIRDAATLILSQHCTSQPSPRVGNLISQIRGARAWACGTSLQSVSGAGDDPVQARKIIKQPQRVGAGPMKRENGLHLETLLDPVDDCFSEEAPDATKHKLSSFLFSYLSVQTKKKTVRSLSCNSVPVSAQKPLPTEASVKNGGSSRVRIFSRFPEDMMMLKKSAFKKLIKFYSVPSFPECSSQCGLQLPCCPLQAMV.

Substrate-binding residues include Y81 and H194. N6-(pyridoxal phosphate)lysine is present on K305.

The protein belongs to the group II decarboxylase family. Homodimer. Pyridoxal 5'-phosphate serves as cofactor.

It carries out the reaction L-histidine + H(+) = histamine + CO2. It functions in the pathway amine and polyamine biosynthesis; histamine biosynthesis; histamine from L-histidine: step 1/1. Functionally, catalyzes the biosynthesis of histamine from histidine. The sequence is that of Histidine decarboxylase (HDC) from Homo sapiens (Human).